Consider the following 66-residue polypeptide: Sarcoplasmic/endoplasmic reticulum calcium ATPase regulator ARLN (66 aa).

Methionine 1 carries the N-acetylmethionine modification. A disordered region spans residues 1-37; it reads MEVDAPGVDGRDGLRERRGFSEGGRQNFDVRPQSGAN. Residues 9–20 are compositionally biased toward basic and acidic residues; sequence DGRDGLRERRGF. The chain crosses the membrane as a helical span at residues 45–65; it reads WLDLWLFILFDVVVFLFVYFL.

In terms of assembly, homooligomer. Can also form heterooligomers with other sarcoplasmic/endoplasmic reticulum calcium ATPase (SERCA) regulators ERLN, PLN, SLN and STRIT1/DWORF. Monomer. Interacts as a monomer with ATP2A2/SERCA2; the interaction results in inhibition of ATP2A2 Ca(2+) affinity.

The protein resides in the endoplasmic reticulum membrane. Functionally, inhibits the activity of the calcium ATPases ATP2A2/SERCA2 and ATP2A3/SERCA3 by decreasing their apparent affinity for Ca(2+). The polypeptide is Sarcoplasmic/endoplasmic reticulum calcium ATPase regulator ARLN (Homo sapiens (Human)).